The sequence spans 331 residues: Phosphate acyltransferase (331 aa).

This sequence belongs to the PlsX family. In terms of assembly, homodimer. Probably interacts with PlsY.

Its subcellular location is the cytoplasm. The catalysed reaction is a fatty acyl-[ACP] + phosphate = an acyl phosphate + holo-[ACP]. It participates in lipid metabolism; phospholipid metabolism. Its function is as follows. Catalyzes the reversible formation of acyl-phosphate (acyl-PO(4)) from acyl-[acyl-carrier-protein] (acyl-ACP). This enzyme utilizes acyl-ACP as fatty acyl donor, but not acyl-CoA. The protein is Phosphate acyltransferase of Ureaplasma urealyticum serovar 10 (strain ATCC 33699 / Western).